The following is a 351-amino-acid chain: Transcriptional activator POG1 (351 aa).

Over residues 1–26 the composition is skewed to basic and acidic residues; sequence MKQEPHRQSEEKEKPKGPMAVEREQH. The disordered stretch occupies residues 1–56; sequence MKQEPHRQSEEKEKPKGPMAVEREQHTSLSSGTTVTASTGDESTNSRPVESSQTEK. Positions 27 to 56 are enriched in polar residues; the sequence is TSLSSGTTVTASTGDESTNSRPVESSQTEK. S152 and S168 each carry phosphoserine. Disordered regions lie at residues 234-256 and 291-351; these read PGMG…TPVM and QHQL…PPPT. Polar residues predominate over residues 241–256; that stretch reads QLPTMSSNSESQTPVM. At S314 the chain carries Phosphoserine.

This sequence belongs to the POG1 family. Post-translationally, phosphorylated by CDC28.

The protein resides in the nucleus. Its function is as follows. Transcriptional activator which promotes cell cycle recovery with CLN2, after pheromone induced G1 arrest, probably inhibiting the ability of STE20 to activate the pheromone response pathway. Binds the promoters of genes that function in cell cycle regulation, cytoskeletal organization, and spindle assembly. May also be involved in stress-resistance. In Saccharomyces cerevisiae (strain ATCC 204508 / S288c) (Baker's yeast), this protein is Transcriptional activator POG1 (POG1).